The primary structure comprises 669 residues: Zinc finger CCCH domain-containing protein 17 (669 aa).

Residues 1-11 (MFAPATQPQQQ) are compositionally biased toward low complexity. The tract at residues 1-23 (MFAPATQPQQQHEQKKQSETVSS) is disordered. C3H1-type zinc fingers lie at residues 34-58 (DCVY…HSEY), 60-86 (RMNP…HPPL), and 114-141 (AKQP…HTPN). Disordered regions lie at residues 150–175 (PVEA…EKKL), 285–306 (VEDR…PDFS), 376–589 (GMRL…VMEE), and 642–669 (EEGE…EMLS). Basic and acidic residues-rich tracts occupy residues 164–175 (KPIENNTEEKKL), 285–299 (VEDR…RGNS), 392–406 (SMDR…DTPR), 420–464 (KLRE…EENH), 478–499 (RRRE…ESKP), and 547–579 (NNKD…PKAE). Composition is skewed to acidic residues over residues 580–589 (VEEEGTVMEE) and 642–659 (EEGE…GEED). The segment covering 660–669 (IEKKTVEMLS) has biased composition (basic and acidic residues).

This Arabidopsis thaliana (Mouse-ear cress) protein is Zinc finger CCCH domain-containing protein 17.